The primary structure comprises 37 residues: MIEVFLFGIVLGLIPITLAGLFVTAYLQYRRGDQLDF.

Residues 5–25 (FLFGIVLGLIPITLAGLFVTA) form a helical membrane-spanning segment.

It belongs to the PetG family. As to quaternary structure, the 4 large subunits of the cytochrome b6-f complex are cytochrome b6, subunit IV (17 kDa polypeptide, PetD), cytochrome f and the Rieske protein, while the 4 small subunits are PetG, PetL, PetM and PetN. The complex functions as a dimer.

The protein localises to the plastid. It localises to the chloroplast thylakoid membrane. Its function is as follows. Component of the cytochrome b6-f complex, which mediates electron transfer between photosystem II (PSII) and photosystem I (PSI), cyclic electron flow around PSI, and state transitions. PetG is required for either the stability or assembly of the cytochrome b6-f complex. In Capsella bursa-pastoris (Shepherd's purse), this protein is Cytochrome b6-f complex subunit 5.